A 324-amino-acid polypeptide reads, in one-letter code: Glyoxylate/hydroxypyruvate reductase B (324 aa).

Catalysis depends on residues R237 and E266. Residue H285 is the Proton donor of the active site.

This sequence belongs to the D-isomer specific 2-hydroxyacid dehydrogenase family. GhrB subfamily. Homodimer.

Its subcellular location is the cytoplasm. The enzyme catalyses glycolate + NADP(+) = glyoxylate + NADPH + H(+). It carries out the reaction (R)-glycerate + NAD(+) = 3-hydroxypyruvate + NADH + H(+). The catalysed reaction is (R)-glycerate + NADP(+) = 3-hydroxypyruvate + NADPH + H(+). Catalyzes the NADPH-dependent reduction of glyoxylate and hydroxypyruvate into glycolate and glycerate, respectively. This chain is Glyoxylate/hydroxypyruvate reductase B, found in Escherichia coli O6:H1 (strain CFT073 / ATCC 700928 / UPEC).